The following is a 595-amino-acid chain: ATPase family AAA domain-containing protein 3 (595 aa).

The tract at residues 1 to 48 is disordered; sequence MSWLFGVQKNATPQIPDDFQAGAAPGGPQQPGQGQRQEGNSKMAYSFD. The Mitochondrial intermembrane portion of the chain corresponds to 1–243; that stretch reads MSWLFGVQKN…LNQFLNDKTK (243 aa). The span at 20-35 shows a compositional bias: low complexity; the sequence is QAGAAPGGPQQPGQGQ. 2 coiled-coil regions span residues 80–107 and 140–175; these read VTRQ…HIRV and EELA…EHEL. A helical membrane pass occupies residues 244–260; the sequence is IAAAVGGLTALAVGWYT. The Mitochondrial matrix portion of the chain corresponds to 261–595; it reads AKRGTGVTAR…GTTLKRETAV (335 aa). 349–356 serves as a coordination point for ATP; the sequence is GPPGTGKT. Residues 592–595 carry the PDZ-binding motif; sequence ETAV.

This sequence belongs to the AAA ATPase family.

It is found in the mitochondrion inner membrane. Its subcellular location is the mitochondrion matrix. It localises to the mitochondrion nucleoid. Its function is as follows. Essential for mitochondrial network organization, mitochondrial metabolism and cell growth at organism and cellular level. Important during development for the up-regulation of mitochondrial activity during the transition to higher larval stages. Regulates mitochondrial iron homeostasis. May play an important role in mitochondrial protein synthesis. May also participate in mitochondrial DNA replication. May bind to mitochondrial DNA D-loops and contribute to nucleoid stability. Plays a role in regulating the production of reactive oxygen species in response to heat stress. The polypeptide is ATPase family AAA domain-containing protein 3 (Caenorhabditis elegans).